Consider the following 438-residue polypeptide: Proline--tRNA ligase (438 aa).

It belongs to the class-II aminoacyl-tRNA synthetase family. ProS type 2 subfamily. Homodimer.

It localises to the cytoplasm. The catalysed reaction is tRNA(Pro) + L-proline + ATP = L-prolyl-tRNA(Pro) + AMP + diphosphate. Catalyzes the attachment of proline to tRNA(Pro) in a two-step reaction: proline is first activated by ATP to form Pro-AMP and then transferred to the acceptor end of tRNA(Pro). The polypeptide is Proline--tRNA ligase (Rhodopseudomonas palustris (strain TIE-1)).